Reading from the N-terminus, the 540-residue chain is Chaperonin GroEL (540 aa).

ATP-binding positions include 29–32, 86–90, G413, 476–478, and D492; these read TLGP, DGTTT, and NAA.

It belongs to the chaperonin (HSP60) family. As to quaternary structure, forms a cylinder of 14 subunits composed of two heptameric rings stacked back-to-back. Interacts with the co-chaperonin GroES.

The protein resides in the cytoplasm. The catalysed reaction is ATP + H2O + a folded polypeptide = ADP + phosphate + an unfolded polypeptide.. Functionally, together with its co-chaperonin GroES, plays an essential role in assisting protein folding. The GroEL-GroES system forms a nano-cage that allows encapsulation of the non-native substrate proteins and provides a physical environment optimized to promote and accelerate protein folding. This Streptococcus pneumoniae (strain ATCC 700669 / Spain 23F-1) protein is Chaperonin GroEL.